Consider the following 976-residue polypeptide: Protein PLASTID MOVEMENT IMPAIRED 1-RELATED 2 (976 aa).

Positions 81–229 constitute a C2 NT-type domain; it reads IAHFGQRRFD…VLNLSFDYSV (149 aa). Positions 309 to 319 are enriched in basic and acidic residues; the sequence is KQAADSDDSGK. 2 disordered regions span residues 309–343 and 381–419; these read KQAA…ESSR and NLLP…STEK. Positions 394 to 414 are enriched in low complexity; that stretch reads STFSSQVISESSESKSPSAMD.

Seems not necessary for chloroplast and nuclear photorelocation movements. The chain is Protein PLASTID MOVEMENT IMPAIRED 1-RELATED 2 from Arabidopsis thaliana (Mouse-ear cress).